A 365-amino-acid chain; its full sequence is Cytoplasmic tRNA 2-thiolation protein 1 (365 aa).

Belongs to the TtcA family. CTU1/NCS6/ATPBD3 subfamily.

It is found in the cytoplasm. Its pathway is tRNA modification; 5-methoxycarbonylmethyl-2-thiouridine-tRNA biosynthesis. Plays a central role in 2-thiolation of mcm(5)S(2)U at tRNA wobble positions of tRNA(Lys), tRNA(Glu) and tRNA(Gln). Directly binds tRNAs and probably acts by catalyzing adenylation of tRNAs, an intermediate required for 2-thiolation. It is unclear whether it acts as a sulfurtransferase that transfers sulfur from thiocarboxylated URM1 onto the uridine of tRNAs at wobble position. Prior mcm(5) tRNA modification by the elongator complex is required for 2-thiolation. May also be involved in protein urmylation. The protein is Cytoplasmic tRNA 2-thiolation protein 1 of Yarrowia lipolytica (strain CLIB 122 / E 150) (Yeast).